The primary structure comprises 344 residues: L-rhamnose-proton symporter (344 aa).

The next 10 helical transmembrane spans lie at 4–24 (AITM…CFYA), 38–58 (WSVG…ALLL), 68–88 (FSLS…IGNI), 101–121 (MGIG…TPII), 137–157 (TLLG…AGQL), 175–195 (LVLA…MNAA), 214–234 (LPSY…FCFI), 259–279 (VLLS…YAWG), 290–310 (ISWM…GLVL), and 323–343 (VLSL…IGMA).

The protein belongs to the L-rhamnose transporter (TC 2.A.7.6) family.

Its subcellular location is the cell inner membrane. It carries out the reaction L-rhamnopyranose(in) + H(+)(in) = L-rhamnopyranose(out) + H(+)(out). Uptake of L-rhamnose across the cytoplasmic membrane with the concomitant transport of protons into the cell (symport system). The protein is L-rhamnose-proton symporter of Escherichia coli O127:H6 (strain E2348/69 / EPEC).